The following is a 251-amino-acid chain: Aquaporin (251 aa).

The Cytoplasmic segment spans residues 1–11 (MAKEALKTLQS). Residues 12 to 32 (MFGEMVASFVFGFAVYSAILG) traverse the membrane as a helical segment. The Extracellular segment spans residues 33–42 (SSISQSSADK). A helical transmembrane segment spans residues 43–63 (VIVGLTVGFSGIGVIYSFCDV). The Cytoplasmic segment spans residues 64 to 86 (TIAHFNPAITLAAILTSKIDVLQ). The short motif at 69 to 71 (NPA) is the NPA element. The chain crosses the membrane as a helical span at residues 87-107 (GLGYMLAQYIGFMLAVCALLV). Topologically, residues 108–133 (CSPVEYKETLDTIRPGPTDFGATSLN) are extracellular. A helical transmembrane segment spans residues 134–154 (VFFAEFFLTAIFVHIVFATAV). Residues 155 to 179 (NPYKPKVDTEGKFVDPDEKEPVDRR) lie on the Cytoplasmic side of the membrane. A helical transmembrane segment spans residues 180–200 (ITAPLCIGLTLGFLAFMGLAS). The Extracellular segment spans residues 201 to 224 (SGGAFNPGLTFAPMAMSNTWSHFW). Residues 206–208 (NPG) carry the NPG motif. A helical transmembrane segment spans residues 225–245 (IYLGGQYLGGLTGGLLQVLVL). Residues 246–251 (YKLSSD) are Cytoplasmic-facing.

The protein belongs to the MIP/aquaporin (TC 1.A.8) family.

Its subcellular location is the cell membrane. Functionally, water channel required to facilitate the transport of water across membranes. Involved in osmotolerance. The sequence is that of Aquaporin (AQP) from Encephalitozoon intestinalis (Microsporidian parasite).